Consider the following 173-residue polypeptide: Cell division protein SepF (173 aa).

Residues 31 to 82 (FEDFDEPLDERPSRNRSPRDDSRNNAVTDSSDHSPSRNERRSPAPAPATADL) are disordered. Basic and acidic residues-rich tracts occupy residues 39-53 (DERP…DDSR) and 60-72 (SSDH…ERRS).

This sequence belongs to the SepF family. Homodimer. Interacts with FtsZ.

The protein resides in the cytoplasm. Functionally, cell division protein that is part of the divisome complex and is recruited early to the Z-ring. Probably stimulates Z-ring formation, perhaps through the cross-linking of FtsZ protofilaments. Its function overlaps with FtsA. This Thermobifida fusca (strain YX) protein is Cell division protein SepF.